A 76-amino-acid polypeptide reads, in one-letter code: MFTLKKSMLLLFFLGTISLSLCEEERNADEDDGEKEVKRGIFALIKTAAKFVGKNLLRQAGKAGLEHLACKANNQC.

An N-terminal signal peptide occupies residues 1 to 22; the sequence is MFTLKKSMLLLFFLGTISLSLC. The propeptide at 23-37 is removed in mature form; that stretch reads EEERNADEDDGEKEV. The cysteines at positions 70 and 76 are disulfide-linked.

Belongs to the frog skin active peptide (FSAP) family. Esculentin subfamily. Expressed by the skin glands.

It is found in the secreted. Its function is as follows. Antimicrobial peptide. This is Esculentin-2MT3 from Amolops mantzorum (Sichuan torrent frog).